Reading from the N-terminus, the 204-residue chain is Salt stress root protein RS1 (204 aa).

Residues 128-204 are disordered; sequence FVPKEEPKPE…AAPAAEPEKQ (77 aa). Basic and acidic residues predominate over residues 147-161; that stretch reads TSREVAVEEEKKEEE. The span at 164–180 shows a compositional bias: low complexity; the sequence is PAEPAAAAAEAAAPSTE. Over residues 182-192 the composition is skewed to basic and acidic residues; the sequence is VEEKKEEEKPA. A compositionally biased stretch (low complexity) spans 193-204; that stretch reads EAAAPAAEPEKQ.

This sequence belongs to the DREPP family.

This chain is Salt stress root protein RS1, found in Oryza sativa subsp. indica (Rice).